We begin with the raw amino-acid sequence, 342 residues long: Succinylglutamate desuccinylase (342 aa).

Positions 63, 66, and 155 each coordinate Zn(2+). The active site involves E219.

It belongs to the AspA/AstE family. Succinylglutamate desuccinylase subfamily. It depends on Zn(2+) as a cofactor.

It carries out the reaction N-succinyl-L-glutamate + H2O = L-glutamate + succinate. It participates in amino-acid degradation; L-arginine degradation via AST pathway; L-glutamate and succinate from L-arginine: step 5/5. Functionally, transforms N(2)-succinylglutamate into succinate and glutamate. This Vibrio vulnificus (strain YJ016) protein is Succinylglutamate desuccinylase.